We begin with the raw amino-acid sequence, 351 residues long: Cell shape-determining protein MreB (351 aa).

ATP contacts are provided by residues Thr-20–Asn-22, Gly-169–Thr-171, Glu-217–Lys-220, and Gly-299–Leu-302.

It belongs to the FtsA/MreB family. Forms polymers.

It is found in the cytoplasm. Forms membrane-associated dynamic filaments that are essential for cell shape determination. Acts by regulating cell wall synthesis and cell elongation, and thus cell shape. A feedback loop between cell geometry and MreB localization may maintain elongated cell shape by targeting cell wall growth to regions of negative cell wall curvature. The protein is Cell shape-determining protein MreB of Haemophilus influenzae (strain ATCC 51907 / DSM 11121 / KW20 / Rd).